We begin with the raw amino-acid sequence, 426 residues long: High affinity 3',5'-cyclic-AMP phosphodiesterase 7A (426 aa).

In terms of domain architecture, PDEase spans 80 to 402; sequence LDEDYNGQAK…ASWKGLQRQQ (323 aa). His-156 (proton donor) is an active-site residue. Positions 160, 196, 197, and 306 each coordinate a divalent metal cation.

This sequence belongs to the cyclic nucleotide phosphodiesterase family. PDE7 subfamily. In terms of assembly, interacts with CBFA2T3. The cofactor is a divalent metal cation.

It localises to the cytoplasm. It is found in the cytosol. The enzyme catalyses 3',5'-cyclic AMP + H2O = AMP + H(+). It participates in purine metabolism; 3',5'-cyclic AMP degradation; AMP from 3',5'-cyclic AMP: step 1/1. Hydrolyzes the second messenger cAMP, which is a key regulator of many important physiological processes. May have a role in muscle signal transduction. The chain is High affinity 3',5'-cyclic-AMP phosphodiesterase 7A (Pde7a) from Rattus norvegicus (Rat).